A 336-amino-acid polypeptide reads, in one-letter code: GTPase Obg (336 aa).

An Obg domain is found at 1–159; sequence MKFLDETKVY…KTIWLRLKLI (159 aa). Residues 160-327 form the OBG-type G domain; it reads ADAGLVGLPN…ALRALRSVIA (168 aa). GTP is bound by residues 166 to 173, 191 to 195, 212 to 215, 279 to 282, and 308 to 310; these read GLPNAGKS, FTTLH, DIPG, SQID, and SAV. Mg(2+)-binding residues include Ser173 and Thr193.

Belongs to the TRAFAC class OBG-HflX-like GTPase superfamily. OBG GTPase family. As to quaternary structure, monomer. Mg(2+) serves as cofactor.

The protein resides in the cytoplasm. An essential GTPase which binds GTP, GDP and possibly (p)ppGpp with moderate affinity, with high nucleotide exchange rates and a fairly low GTP hydrolysis rate. Plays a role in control of the cell cycle, stress response, ribosome biogenesis and in those bacteria that undergo differentiation, in morphogenesis control. The sequence is that of GTPase Obg from Rhizobium meliloti (strain 1021) (Ensifer meliloti).